Consider the following 324-residue polypeptide: Glyoxylate/hydroxypyruvate reductase B (324 aa).

Active-site residues include R237 and E266. H285 acts as the Proton donor in catalysis.

Belongs to the D-isomer specific 2-hydroxyacid dehydrogenase family. GhrB subfamily. As to quaternary structure, homodimer.

The protein resides in the cytoplasm. It carries out the reaction glycolate + NADP(+) = glyoxylate + NADPH + H(+). It catalyses the reaction (R)-glycerate + NAD(+) = 3-hydroxypyruvate + NADH + H(+). The enzyme catalyses (R)-glycerate + NADP(+) = 3-hydroxypyruvate + NADPH + H(+). Catalyzes the NADPH-dependent reduction of glyoxylate and hydroxypyruvate into glycolate and glycerate, respectively. This is Glyoxylate/hydroxypyruvate reductase B from Salmonella heidelberg (strain SL476).